A 334-amino-acid chain; its full sequence is Sensor protein BceS (334 aa).

Residues 1 to 12 lie on the Cytoplasmic side of the membrane; sequence MIKAFLIERRSW. A helical transmembrane segment spans residues 13-33; sequence IAAFLFQQALMLFIAFVDPSI. Residue serine 34 is a topological domain, extracellular. The chain crosses the membrane as a helical span at residues 35-55; the sequence is FGNVLYMVYLCILFFIIFLWF. The Cytoplasmic portion of the chain corresponds to 56 to 334; it reads RYRKETAFYK…RNQFEHVISV (279 aa). A Histidine kinase domain is found at 121–326; sequence AWIHEVKTPL…VFTLTFPIRN (206 aa). Phosphohistidine; by autocatalysis is present on histidine 124.

It is found in the cell membrane. It catalyses the reaction ATP + protein L-histidine = ADP + protein N-phospho-L-histidine.. Its function is as follows. Member of the two-component regulatory system BceS/BceR involved in the regulation of bacitracin resistance. Activates BceR in response to extracellular bacitracin. The polypeptide is Sensor protein BceS (bceS) (Bacillus subtilis (strain 168)).